The primary structure comprises 285 residues: MAIKKIISRSNSGIHNATVIDFKKLLTNSKPEKSLLVTLKKHAGRNNQGKITVRHHGGRHKRKYRLIDFKRYHYDNLKATVKSIEYDPNRSCFISLLHYQNGVKTYIISPDGIKVGDQVYSSDHAIDIKLGYCMPLAFIPEGTQVHNIELNPKGGGKIARSAGSYARILGQDETGKYIILQLISGETRKFLKECRATVGVVSNLDHNLVVIGKAGRSRHKGIRPTVRGSAMNPNDHPHGGGEGRSPVGRDAPRTPWGKRHMGVKTRNMKKHSTNLIIRNRKGEQY.

A disordered region spans residues 215 to 285 (GRSRHKGIRP…IIRNRKGEQY (71 aa)). The span at 256 to 272 (WGKRHMGVKTRNMKKHS) shows a compositional bias: basic residues.

The protein belongs to the universal ribosomal protein uL2 family. Part of the 50S ribosomal subunit. Forms a bridge to the 30S subunit in the 70S ribosome.

One of the primary rRNA binding proteins. Required for association of the 30S and 50S subunits to form the 70S ribosome, for tRNA binding and peptide bond formation. It has been suggested to have peptidyltransferase activity; this is somewhat controversial. Makes several contacts with the 16S rRNA in the 70S ribosome. The protein is Large ribosomal subunit protein uL2 of Mycoplasma genitalium (strain ATCC 33530 / DSM 19775 / NCTC 10195 / G37) (Mycoplasmoides genitalium).